We begin with the raw amino-acid sequence, 257 residues long: Glutamate racemase (257 aa).

Residues 12 to 13 (DS) and 44 to 45 (YG) contribute to the substrate site. Cysteine 75 serves as the catalytic Proton donor/acceptor. 76 to 77 (NT) lines the substrate pocket. The Proton donor/acceptor role is filled by cysteine 185. Substrate is bound at residue 186–187 (TH).

This sequence belongs to the aspartate/glutamate racemases family.

The enzyme catalyses L-glutamate = D-glutamate. It functions in the pathway cell wall biogenesis; peptidoglycan biosynthesis. Functionally, provides the (R)-glutamate required for cell wall biosynthesis. This Clostridium botulinum (strain Langeland / NCTC 10281 / Type F) protein is Glutamate racemase.